The following is a 290-amino-acid chain: 4-diphosphocytidyl-2-C-methyl-D-erythritol kinase (290 aa).

Residue lysine 11 is part of the active site. 97–107 provides a ligand contact to ATP; the sequence is PVAAGIGGGSS. The active site involves aspartate 139.

It belongs to the GHMP kinase family. IspE subfamily.

The enzyme catalyses 4-CDP-2-C-methyl-D-erythritol + ATP = 4-CDP-2-C-methyl-D-erythritol 2-phosphate + ADP + H(+). Its pathway is isoprenoid biosynthesis; isopentenyl diphosphate biosynthesis via DXP pathway; isopentenyl diphosphate from 1-deoxy-D-xylulose 5-phosphate: step 3/6. In terms of biological role, catalyzes the phosphorylation of the position 2 hydroxy group of 4-diphosphocytidyl-2C-methyl-D-erythritol. This Methylobacterium radiotolerans (strain ATCC 27329 / DSM 1819 / JCM 2831 / NBRC 15690 / NCIMB 10815 / 0-1) protein is 4-diphosphocytidyl-2-C-methyl-D-erythritol kinase.